The chain runs to 246 residues: Eukaryotic translation initiation factor 6 (246 aa).

Ser-174 and Ser-175 each carry phosphoserine; by CK1.

The protein belongs to the eIF-6 family. In terms of assembly, monomer. Associates with the 60S ribosomal subunit. Post-translationally, phosphorylation at Ser-174 and Ser-175 promotes nuclear export.

It localises to the cytoplasm. The protein resides in the nucleus. Its subcellular location is the nucleolus. Functionally, binds to the 60S ribosomal subunit and prevents its association with the 40S ribosomal subunit to form the 80S initiation complex in the cytoplasm. Is also involved in ribosome biogenesis. Associates with pre-60S subunits in the nucleus and is involved in its nuclear export. The chain is Eukaryotic translation initiation factor 6 (tif-6) from Neurospora crassa (strain ATCC 24698 / 74-OR23-1A / CBS 708.71 / DSM 1257 / FGSC 987).